The primary structure comprises 448 residues: MAKRGRKPKELVPGPGSIDPSDVPKLEGASVPVMSTSYDVVVDREFDELLQGKDGLLVYHKMLSDGTVKNALNYIFGRIRSAKWYVEPASTDPEDIAIAAFIHAQLGIDDASVGKYPFGRLFAIYENAYIYGMAAGEIVLTLGADGKLILDKIVPIHPFNIDEVLYDEEGGPKALKLSGEVKGGSQFVSGLEIPIWKTVVFLHNDDGSFTGQSALRAAVPHWLAKRALILLINHGLERFMIGVPTLTIPKSVRQGTKQWEAAKEIVKNFVQKPRHGIILPDDWKFDTVDLKSAMPDAIPYLTYHDAGIARALGIDFNTVQLNMGVQAINIGEFVSLTQQTIISLQREFASAVNLYLIPKLVLPNWPSATRFPRLTFEMEERNDFSAAANLMGMLINAVKDSEDIPTELKALIDALPSKMRRALGVVDEVREAVRQPADSRYLYTRRRR.

Positions 1–25 are disordered; sequence MAKRGRKPKELVPGPGSIDPSDVPK.

The protein belongs to the P23virus portal protein family. In terms of assembly, homododecamer. Interacts with the capsid protein. Interacts with the terminase large subunit; this interaction allows the packaging of viral DNA.

Its subcellular location is the virion. Its function is as follows. Forms the portal vertex of the capsid. This portal plays critical roles in head assembly, genome packaging, neck/tail attachment, and genome ejection. The portal protein multimerizes as a single ring-shaped homododecamer arranged around a central channel. Forms the portal vertex of the capsid. This portal plays critical roles in head assembly, genome packaging, neck/tail attachment, and genome ejection. This chain is Portal protein, found in Thermus thermophilus (Thermus thermophilus phage G20c).